Consider the following 54-residue polypeptide: UPF0391 membrane protein Daro_2080 (54 aa).

Transmembrane regions (helical) follow at residues 5–25 (AIVF…GIAA) and 30–50 (IAKI…VMGF).

The protein belongs to the UPF0391 family.

The protein localises to the cell membrane. The sequence is that of UPF0391 membrane protein Daro_2080 from Dechloromonas aromatica (strain RCB).